We begin with the raw amino-acid sequence, 831 residues long: Heat shock 70 kDa protein 15 (831 aa).

Disordered stretches follow at residues 502-579 (EEEV…KKKV) and 784-831 (IMTK…EGST). A compositionally biased stretch (basic and acidic residues) spans 512–526 (DQSEETAKMDTDKAS). Ser-533 and Ser-536 each carry phosphoserine. Over residues 787-800 (KPKPAAKAEAPQAK) the composition is skewed to low complexity.

Belongs to the heat shock protein 70 (TC 1.A.33) family. HSP110/SSE subfamily.

The protein resides in the cytoplasm. Its subcellular location is the nucleus. In terms of biological role, in cooperation with other chaperones, Hsp70s are key components that facilitate folding of de novo synthesized proteins, assist translocation of precursor proteins into organelles, and are responsible for degradation of damaged protein under stress conditions. This is Heat shock 70 kDa protein 15 (HSP70-15) from Arabidopsis thaliana (Mouse-ear cress).